We begin with the raw amino-acid sequence, 206 residues long: Ribosomal RNA small subunit methyltransferase G (206 aa).

S-adenosyl-L-methionine is bound by residues Gly74, Leu79, 125–126, and Arg140; that span reads VE.

Belongs to the methyltransferase superfamily. RNA methyltransferase RsmG family.

It localises to the cytoplasm. It carries out the reaction guanosine(527) in 16S rRNA + S-adenosyl-L-methionine = N(7)-methylguanosine(527) in 16S rRNA + S-adenosyl-L-homocysteine. In terms of biological role, specifically methylates the N7 position of guanine in position 527 of 16S rRNA. The polypeptide is Ribosomal RNA small subunit methyltransferase G (Shewanella sp. (strain ANA-3)).